Reading from the N-terminus, the 245-residue chain is tRNA1(Val) (adenine(37)-N6)-methyltransferase (245 aa).

It belongs to the methyltransferase superfamily. tRNA (adenine-N(6)-)-methyltransferase family.

Its subcellular location is the cytoplasm. It carries out the reaction adenosine(37) in tRNA1(Val) + S-adenosyl-L-methionine = N(6)-methyladenosine(37) in tRNA1(Val) + S-adenosyl-L-homocysteine + H(+). Its function is as follows. Specifically methylates the adenine in position 37 of tRNA(1)(Val) (anticodon cmo5UAC). The protein is tRNA1(Val) (adenine(37)-N6)-methyltransferase of Shigella dysenteriae serotype 1 (strain Sd197).